A 171-amino-acid polypeptide reads, in one-letter code: Small ribosomal subunit protein uS4 (171 aa).

Residues 104 to 168 (RRLQTIVYKK…SPFKERAEEA (65 aa)) enclose the S4 RNA-binding domain.

Belongs to the universal ribosomal protein uS4 family. As to quaternary structure, part of the 30S ribosomal subunit. Contacts protein S5. The interaction surface between S4 and S5 is involved in control of translational fidelity.

Its function is as follows. One of the primary rRNA binding proteins, it binds directly to 16S rRNA where it nucleates assembly of the body of the 30S subunit. In terms of biological role, with S5 and S12 plays an important role in translational accuracy. This chain is Small ribosomal subunit protein uS4, found in Aeropyrum pernix (strain ATCC 700893 / DSM 11879 / JCM 9820 / NBRC 100138 / K1).